Here is a 247-residue protein sequence, read N- to C-terminus: ATP synthase subunit a, chloroplastic (247 aa).

5 consecutive transmembrane segments (helical) span residues 38-58 (QVLITSWFVIAILLGSAIIAV), 95-115 (VPFIGTMFLFIFVSNWSGALL), 134-154 (INTTVALALPTSVAYFYAGLT), 199-219 (LVVVVLVSLVPSVVPIPVMFL), and 220-240 (GLFTSGIQALIFATLAAAYIG).

It belongs to the ATPase A chain family. In terms of assembly, F-type ATPases have 2 components, CF(1) - the catalytic core - and CF(0) - the membrane proton channel. CF(1) has five subunits: alpha(3), beta(3), gamma(1), delta(1), epsilon(1). CF(0) has four main subunits: a, b, b' and c.

It localises to the plastid. The protein resides in the chloroplast thylakoid membrane. Its function is as follows. Key component of the proton channel; it plays a direct role in the translocation of protons across the membrane. The polypeptide is ATP synthase subunit a, chloroplastic (Ranunculus macranthus (Large buttercup)).